A 390-amino-acid polypeptide reads, in one-letter code: (S)-8-oxocitronellyl enol synthase CYC2 (390 aa).

NADP(+) is bound by residues 35 to 37 (TGI), 63 to 64 (RR), 81 to 82 (DI), 105 to 106 (TW), and Gln-143. Catalysis depends on residues Lys-147 and Tyr-179. Substrate contacts are provided by Lys-147 and Tyr-179. NADP(+)-binding positions include Tyr-179 and 213–215 (SMM).

This sequence belongs to the short-chain dehydrogenases/reductases (SDR) family. Highly divergent.

The enzyme catalyses (S)-8-oxocitronellyl enol + NADP(+) = (6E)-8-oxogeranial + NADPH + H(+). The catalysed reaction is (S)-8-oxocitronellyl enol + NAD(+) = (6E)-8-oxogeranial + NADH + H(+). Its function is as follows. Iridoid synthase that catalyzes the first step in generation of the iridoid ring scaffold using the linear monoterpene (6E)-8-oxogeranial as substrate. Iridoids comprise a large family of distinctive bicyclic monoterpenes that possess a wide range of pharmacological activities, including anticancer, anti-inflammatory, antifungal and antibacterial activities. The sequence is that of (S)-8-oxocitronellyl enol synthase CYC2 from Camptotheca acuminata (Happy tree).